The following is a 447-amino-acid chain: Membrane metalloprotease ARASP, chloroplastic (447 aa).

A chloroplast-targeting transit peptide spans 1–73 (MLLNISSSPI…YPDGERFDFR (73 aa)). Residue His102 participates in Zn(2+) binding. Glu103 is an active-site residue. Zn(2+) is bound at residue His106. Residues 177-197 (SIVVSAGIIANVIFAYAIIFV) traverse the membrane as a helical segment. Residues 202 to 244 (VGLPVQEAFPGVLVPEVKTFSAASRDGLLSGDVILAVDGTELS) enclose the PDZ domain. Transmembrane regions (helical) follow at residues 379–399 (LAVINLLPLPALDGGTLALIL) and 413–433 (VEQGIMSSGIMLVIFLGLFLI).

It belongs to the peptidase M50A family. It depends on Zn(2+) as a cofactor. As to expression, expressed in green seedlings and cotyledons. Low levels of expression in roots, siliques and seeds.

It localises to the plastid. The protein resides in the chloroplast inner membrane. Functionally, metalloprotease essential for chloroplast and plant development. May be involved in regulated intramembrane proteolysis (RIP). The polypeptide is Membrane metalloprotease ARASP, chloroplastic (Arabidopsis thaliana (Mouse-ear cress)).